A 130-amino-acid chain; its full sequence is Ribosome biogenesis inhibitor MINAS-60 (130 aa).

A disordered region spans residues 61–130; sequence SRVRRIPTRP…RRRRPVTSSC (70 aa). Residues 109–130 show a composition bias toward basic residues; the sequence is KGRRRRRRRMRRRRRRPVTSSC.

As to quaternary structure, interacts with 60S ribosome assembly factors GTPBP4 and MRTO4.

It localises to the nucleus. The protein resides in the nucleolus. Its function is as follows. Acts as a late-stage inhibitor of pre-60S ribosome assembly by preventing pre-60S ribosome export from nucleus. This is Ribosome biogenesis inhibitor MINAS-60 from Homo sapiens (Human).